Here is a 389-residue protein sequence, read N- to C-terminus: Succinate--CoA ligase [ADP-forming] subunit beta (389 aa).

Residues Lys-46, Gly-53 to Gly-55, Glu-99, Cys-102, and Glu-107 contribute to the ATP site. The Mg(2+) site is built by Asn-199 and Asp-213. Residues Asn-264 and Gly-321–Val-323 each bind substrate.

This sequence belongs to the succinate/malate CoA ligase beta subunit family. Heterotetramer of two alpha and two beta subunits. The cofactor is Mg(2+).

It carries out the reaction succinate + ATP + CoA = succinyl-CoA + ADP + phosphate. The catalysed reaction is GTP + succinate + CoA = succinyl-CoA + GDP + phosphate. The protein operates within carbohydrate metabolism; tricarboxylic acid cycle; succinate from succinyl-CoA (ligase route): step 1/1. Its function is as follows. Succinyl-CoA synthetase functions in the citric acid cycle (TCA), coupling the hydrolysis of succinyl-CoA to the synthesis of either ATP or GTP and thus represents the only step of substrate-level phosphorylation in the TCA. The beta subunit provides nucleotide specificity of the enzyme and binds the substrate succinate, while the binding sites for coenzyme A and phosphate are found in the alpha subunit. The chain is Succinate--CoA ligase [ADP-forming] subunit beta from Haemophilus influenzae (strain PittEE).